Reading from the N-terminus, the 564-residue chain is MEALLLPPSPEPQNQITNPANSKPNHQSGDVHKDETMMMKKKKDTNPSNLEKRKLKGKKKEIMDNDEASSSYCSTSSTSNSNSTKRVTRVVHRLRNPMRLGMARRSVGERQAEKLAKPLGFSLAAFANMVIARKNAAGQNVYVDDLVEIFATLVEESLANVYGNKLGSFATNFEQTFSSTLKILKLTNECANPHQSNNNDGGSCNLDRSTIDGCSDTELFERETSSATSAYEVMQGSATATSLMNELALFEETLQLSCVPPRSSAMALTTDERFLKEQTRANDLKTVEIGLQIRELRCKETALGLKFESNNLGKAALELDVSKAAFRAEKFKTELEDTRKEEMVTRIMDWLLVSVFSMLASMVLGVYNFSIKRIEDATSVCDQSEEKSSSWWVPKQVSSINSGFNTFICRVRVWVQIFFGVLMIIVFTYFLNKRSSGTKQTMPISFIVLFLGIFCGVSGKLCVDTLGGDGKLWLIVWEVFCLLQFVANVFTLALYGLMFGPINVTQETRSNRCNSMFPYWARRSVVYVVILFVLPVINGLLPFATFGEWRDFAMYHLHGGSDYA.

A disordered region spans residues 1 to 87; the sequence is MEALLLPPSP…TSNSNSTKRV (87 aa). Over residues 12–28 the composition is skewed to polar residues; that stretch reads PQNQITNPANSKPNHQS. The span at 29-38 shows a compositional bias: basic and acidic residues; that stretch reads GDVHKDETMM. Low complexity predominate over residues 69 to 84; sequence SSSYCSTSSTSNSNST. The next 5 membrane-spanning stretches (helical) occupy residues 347 to 367, 411 to 431, 443 to 463, 472 to 492, and 526 to 546; these read IMDW…LGVY, VRVW…TYFL, PISF…KLCV, LWLI…VFTL, and VYVV…FATF.

Interacts with SIM and SMR1. As to expression, ubiquitous.

It is found in the membrane. Its subcellular location is the nucleus membrane. In terms of biological role, may play a role in transcriptional processes. Negatively regulates the senescence and chlorotic lesions induced by biotic (e.g. pathogens) and abiotic (e.g. sugars, darkness) agents, probably by controlling programmed cell death (pcd). Negative regulator of plant programmed cell death (PCD) and effector-triggered immunity (ETI). Promotes cell division and endoreduplication (e.g. in trichomes). This chain is Protein CPR-5, found in Arabidopsis thaliana (Mouse-ear cress).